The sequence spans 402 residues: Phosphoglycerate kinase (402 aa).

Substrate is bound by residues 29-31 (DFN), Arg45, 69-72 (HLGR), Arg125, and Arg158. Residues Lys209, Glu331, and 357–360 (GGDT) contribute to the ATP site.

Belongs to the phosphoglycerate kinase family.

Its subcellular location is the cytoplasm. It carries out the reaction (2R)-3-phosphoglycerate + ATP = (2R)-3-phospho-glyceroyl phosphate + ADP. The protein operates within carbohydrate degradation; glycolysis; pyruvate from D-glyceraldehyde 3-phosphate: step 2/5. This chain is Phosphoglycerate kinase (pgk), found in Helicobacter pylori (strain J99 / ATCC 700824) (Campylobacter pylori J99).